The chain runs to 183 residues: Peptide deformylase (183 aa).

The Fe cation site is built by Cys-110 and His-153. The active site involves Glu-154. Fe cation is bound at residue His-157.

The protein belongs to the polypeptide deformylase family. It depends on Fe(2+) as a cofactor.

The catalysed reaction is N-terminal N-formyl-L-methionyl-[peptide] + H2O = N-terminal L-methionyl-[peptide] + formate. In terms of biological role, removes the formyl group from the N-terminal Met of newly synthesized proteins. Requires at least a dipeptide for an efficient rate of reaction. N-terminal L-methionine is a prerequisite for activity but the enzyme has broad specificity at other positions. This chain is Peptide deformylase, found in Listeria monocytogenes serovar 1/2a (strain ATCC BAA-679 / EGD-e).